The sequence spans 258 residues: ATP synthase subunit a (258 aa).

The next 5 membrane-spanning stretches (helical) occupy residues K38 to A58, W94 to F114, Y118 to T138, I193 to P213, and A215 to I235.

This sequence belongs to the ATPase A chain family. In terms of assembly, F-type ATPases have 2 components, CF(1) - the catalytic core - and CF(0) - the membrane proton channel. CF(1) has five subunits: alpha(3), beta(3), gamma(1), delta(1), epsilon(1). CF(0) has three main subunits: a(1), b(2) and c(9-12). The alpha and beta chains form an alternating ring which encloses part of the gamma chain. CF(1) is attached to CF(0) by a central stalk formed by the gamma and epsilon chains, while a peripheral stalk is formed by the delta and b chains.

Its subcellular location is the cell membrane. In terms of biological role, key component of the proton channel; it plays a direct role in the translocation of protons across the membrane. This is ATP synthase subunit a from Rubrobacter xylanophilus (strain DSM 9941 / JCM 11954 / NBRC 16129 / PRD-1).